Consider the following 153-residue polypeptide: 6,7-dimethyl-8-ribityllumazine synthase (153 aa).

5-amino-6-(D-ribitylamino)uracil-binding positions include Phe-22, 56–58, and 80–82; these read AFE and TVI. 85-86 provides a ligand contact to (2S)-2-hydroxy-3-oxobutyl phosphate; sequence ST. The Proton donor role is filled by His-88. Phe-113 provides a ligand contact to 5-amino-6-(D-ribitylamino)uracil. Arg-127 is a (2S)-2-hydroxy-3-oxobutyl phosphate binding site.

This sequence belongs to the DMRL synthase family. As to quaternary structure, forms an icosahedral capsid composed of 60 subunits, arranged as a dodecamer of pentamers.

The catalysed reaction is (2S)-2-hydroxy-3-oxobutyl phosphate + 5-amino-6-(D-ribitylamino)uracil = 6,7-dimethyl-8-(1-D-ribityl)lumazine + phosphate + 2 H2O + H(+). It functions in the pathway cofactor biosynthesis; riboflavin biosynthesis; riboflavin from 2-hydroxy-3-oxobutyl phosphate and 5-amino-6-(D-ribitylamino)uracil: step 1/2. In terms of biological role, catalyzes the formation of 6,7-dimethyl-8-ribityllumazine by condensation of 5-amino-6-(D-ribitylamino)uracil with 3,4-dihydroxy-2-butanone 4-phosphate. This is the penultimate step in the biosynthesis of riboflavin. This Actinobacillus pleuropneumoniae serotype 3 (strain JL03) protein is 6,7-dimethyl-8-ribityllumazine synthase.